Here is a 114-residue protein sequence, read N- to C-terminus: MPRATSDAKLLIQSLGKAYAATPTNLKIIDLYVVFAVATALIQVVYMGIVGSFPFNSFLSGVLSCIGTAVLAVCLRIQVNKDNKEFKDLPPERAFADFVLCNLVLHLVIMNFLG.

Topologically, residues 1 to 30 are cytoplasmic; that stretch reads MPRATSDAKLLIQSLGKAYAATPTNLKIID. Residues 31–51 form a helical membrane-spanning segment; it reads LYVVFAVATALIQVVYMGIVG. The Lumenal segment spans residues 52 to 54; that stretch reads SFP. A helical membrane pass occupies residues 55–75; the sequence is FNSFLSGVLSCIGTAVLAVCL. Over 76–93 the chain is Cytoplasmic; that stretch reads RIQVNKDNKEFKDLPPER. The helical transmembrane segment at 94-114 threads the bilayer; it reads AFADFVLCNLVLHLVIMNFLG.

It belongs to the DAD/OST2 family. Component of the oligosaccharyltransferase (OST) complex.

It is found in the endoplasmic reticulum membrane. The protein operates within protein modification; protein glycosylation. Subunit of the oligosaccharyl transferase (OST) complex that catalyzes the initial transfer of a defined glycan (Glc(3)Man(9)GlcNAc(2) in eukaryotes) from the lipid carrier dolichol-pyrophosphate to an asparagine residue within an Asn-X-Ser/Thr consensus motif in nascent polypeptide chains, the first step in protein N-glycosylation. N-glycosylation occurs cotranslationally and the complex associates with the Sec61 complex at the channel-forming translocon complex that mediates protein translocation across the endoplasmic reticulum (ER). All subunits are required for a maximal enzyme activity. In Oryza sativa subsp. indica (Rice), this protein is Dolichyl-diphosphooligosaccharide--protein glycosyltransferase subunit DAD1 (DAD1).